We begin with the raw amino-acid sequence, 659 residues long: Oligopeptide-binding protein AmiA (659 aa).

Positions 1–22 are cleaved as a signal peptide; it reads MKKNRVFATAGLVLLAAGVLAA. A lipid anchor (N-palmitoyl cysteine) is attached at Cys23. Cys23 carries the S-diacylglycerol cysteine lipid modification.

This sequence belongs to the bacterial solute-binding protein 5 family.

It localises to the cell membrane. Part of the binding-protein-dependent transport system for oligopeptides; probably an oligopeptide binding protein. In Streptococcus pneumoniae serotype 4 (strain ATCC BAA-334 / TIGR4), this protein is Oligopeptide-binding protein AmiA (amiA).